The sequence spans 1748 residues: WD repeat-containing protein 90 (1748 aa).

The tract at residues 1 to 207 (MARAWQHPFL…VTPMPREMAF (207 aa)) is binds with microtubules. Ser241 carries the post-translational modification Phosphoserine. Positions 274-308 (QTPSPTASGRAALAPRPFPEVSLSQERSDASNADG) are disordered. WD repeat units lie at residues 407–450 (GHTD…CLFR), 452–494 (PMHV…LGGE), 501–541 (AHTD…LRSC), 615–654 (SSGP…VLLE), 656–695 (EHEG…YHML), 698–737 (SHTA…QLYD), 740–779 (SSED…VLVE), 782–821 (CHRG…WHVL), 882–922 (SRLD…IIRE), 926–964 (VHPE…SPGP), 969–1009 (GHSE…QSFP), 1156–1201 (GHSA…CQHL), 1204–1245 (PHST…LVSS), 1247–1286 (RLPE…ADIS), 1298–1326 (VGAG…VCVW), 1327–1376 (DTRA…ELRC), 1433–1472 (GHRS…LVIQ), 1475–1520 (VLNQ…MELK), 1523–1562 (PHPV…TFRV), 1568–1614 (GAPI…NHCE), and 1715–1748 (GHDN…VPGL). The disordered stretch occupies residues 1004-1071 (SDQSFPGAPP…GARDTRNSGA (68 aa)).

Belongs to the WD repeat WDR90/POC16 family.

The protein resides in the cytoplasm. It is found in the cytoskeleton. Its subcellular location is the microtubule organizing center. It localises to the centrosome. The protein localises to the centriole. The protein resides in the centriolar satellite. Functionally, microtubule-binding protein that plays a crucial role in ensuring inner core protein localization within the centriole core, as well as in maintaining the microtubule wall integrity and the overall centriole roundness and stability. Required for efficient primary cilium formation. The chain is WD repeat-containing protein 90 (WDR90) from Homo sapiens (Human).